The chain runs to 490 residues: Thiamine biosynthesis bifunctional protein ThiED (490 aa).

Positions M1 to I213 are thiamine-phosphate synthase. 4-amino-2-methyl-5-(diphosphooxymethyl)pyrimidine-binding positions include Q50 to K54 and N82. The Mg(2+) site is built by D83 and D102. S121 lines the 4-amino-2-methyl-5-(diphosphooxymethyl)pyrimidine pocket. S147 to S149 serves as a coordination point for 2-[(2R,5Z)-2-carboxy-4-methylthiazol-5(2H)-ylidene]ethyl phosphate. K150 contributes to the 4-amino-2-methyl-5-(diphosphooxymethyl)pyrimidine binding site. Residues G177 and I197 to S198 contribute to the 2-[(2R,5Z)-2-carboxy-4-methylthiazol-5(2H)-ylidene]ethyl phosphate site. The hydroxymethylpyrimidine/phosphomethylpyrimidine kinase stretch occupies residues L229 to R490. Position 266 (Q266) interacts with 4-amino-5-hydroxymethyl-2-methylpyrimidine.

This sequence in the N-terminal section; belongs to the thiamine-phosphate synthase family. The protein in the C-terminal section; belongs to the ThiD family. The cofactor is Mg(2+).

It catalyses the reaction 2-[(2R,5Z)-2-carboxy-4-methylthiazol-5(2H)-ylidene]ethyl phosphate + 4-amino-2-methyl-5-(diphosphooxymethyl)pyrimidine + 2 H(+) = thiamine phosphate + CO2 + diphosphate. The enzyme catalyses 2-(2-carboxy-4-methylthiazol-5-yl)ethyl phosphate + 4-amino-2-methyl-5-(diphosphooxymethyl)pyrimidine + 2 H(+) = thiamine phosphate + CO2 + diphosphate. The catalysed reaction is 4-methyl-5-(2-phosphooxyethyl)-thiazole + 4-amino-2-methyl-5-(diphosphooxymethyl)pyrimidine + H(+) = thiamine phosphate + diphosphate. It carries out the reaction 4-amino-5-hydroxymethyl-2-methylpyrimidine + ATP = 4-amino-2-methyl-5-(phosphooxymethyl)pyrimidine + ADP + H(+). It catalyses the reaction 4-amino-2-methyl-5-(phosphooxymethyl)pyrimidine + ATP = 4-amino-2-methyl-5-(diphosphooxymethyl)pyrimidine + ADP. It functions in the pathway cofactor biosynthesis; thiamine diphosphate biosynthesis; 4-amino-2-methyl-5-diphosphomethylpyrimidine from 5-amino-1-(5-phospho-D-ribosyl)imidazole: step 3/3. The protein operates within cofactor biosynthesis; thiamine diphosphate biosynthesis; thiamine phosphate from 4-amino-2-methyl-5-diphosphomethylpyrimidine and 4-methyl-5-(2-phosphoethyl)-thiazole: step 1/1. Its function is as follows. Condenses 4-methyl-5-(beta-hydroxyethyl)thiazole monophosphate (THZ-P) and 2-methyl-4-amino-5-hydroxymethyl pyrimidine pyrophosphate (HMP-PP) to form thiamine monophosphate (TMP). Functionally, catalyzes the phosphorylation of hydroxymethylpyrimidine phosphate (HMP-P) to HMP-PP, and of HMP to HMP-P. This Geobacter sulfurreducens (strain ATCC 51573 / DSM 12127 / PCA) protein is Thiamine biosynthesis bifunctional protein ThiED (thiDE).